A 164-amino-acid polypeptide reads, in one-letter code: Ribosome maturation factor RimM (164 aa).

The PRC barrel domain maps to 90-161 (EGRYYVADII…EIIIKPVKTW (72 aa)).

Belongs to the RimM family. As to quaternary structure, binds ribosomal protein uS19.

The protein localises to the cytoplasm. In terms of biological role, an accessory protein needed during the final step in the assembly of 30S ribosomal subunit, possibly for assembly of the head region. Essential for efficient processing of 16S rRNA. May be needed both before and after RbfA during the maturation of 16S rRNA. It has affinity for free ribosomal 30S subunits but not for 70S ribosomes. The chain is Ribosome maturation factor RimM from Clostridium tetani (strain Massachusetts / E88).